The chain runs to 86 residues: MANIKSAKKRAVQSEKRRQHNASRRSMMRTYIKKVYAAVASGDKEAAQKAFNDMQPIVDRQATKGLIHKNKAARHKANLQAQIKAM.

Over residues 1–27 (MANIKSAKKRAVQSEKRRQHNASRRSM) the composition is skewed to basic residues. A disordered region spans residues 1–28 (MANIKSAKKRAVQSEKRRQHNASRRSMM).

It belongs to the bacterial ribosomal protein bS20 family.

Its function is as follows. Binds directly to 16S ribosomal RNA. This Proteus mirabilis (strain HI4320) protein is Small ribosomal subunit protein bS20.